The sequence spans 465 residues: ATP synthase subunit beta (465 aa).

148–155 serves as a coordination point for ATP; the sequence is GGAGVGKT.

Belongs to the ATPase alpha/beta chains family. In terms of assembly, F-type ATPases have 2 components, CF(1) - the catalytic core - and CF(0) - the membrane proton channel. CF(1) has five subunits: alpha(3), beta(3), gamma(1), delta(1), epsilon(1). CF(0) has three main subunits: a(1), b(2) and c(9-12). The alpha and beta chains form an alternating ring which encloses part of the gamma chain. CF(1) is attached to CF(0) by a central stalk formed by the gamma and epsilon chains, while a peripheral stalk is formed by the delta and b chains.

Its subcellular location is the cell inner membrane. The enzyme catalyses ATP + H2O + 4 H(+)(in) = ADP + phosphate + 5 H(+)(out). Its function is as follows. Produces ATP from ADP in the presence of a proton gradient across the membrane. The catalytic sites are hosted primarily by the beta subunits. In Neisseria gonorrhoeae (strain ATCC 700825 / FA 1090), this protein is ATP synthase subunit beta.